Consider the following 177-residue polypeptide: ATP synthase subunit delta (177 aa).

It belongs to the ATPase delta chain family. As to quaternary structure, F-type ATPases have 2 components, F(1) - the catalytic core - and F(0) - the membrane proton channel. F(1) has five subunits: alpha(3), beta(3), gamma(1), delta(1), epsilon(1). F(0) has three main subunits: a(1), b(2) and c(10-14). The alpha and beta chains form an alternating ring which encloses part of the gamma chain. F(1) is attached to F(0) by a central stalk formed by the gamma and epsilon chains, while a peripheral stalk is formed by the delta and b chains.

It localises to the cell inner membrane. F(1)F(0) ATP synthase produces ATP from ADP in the presence of a proton or sodium gradient. F-type ATPases consist of two structural domains, F(1) containing the extramembraneous catalytic core and F(0) containing the membrane proton channel, linked together by a central stalk and a peripheral stalk. During catalysis, ATP synthesis in the catalytic domain of F(1) is coupled via a rotary mechanism of the central stalk subunits to proton translocation. Its function is as follows. This protein is part of the stalk that links CF(0) to CF(1). It either transmits conformational changes from CF(0) to CF(1) or is implicated in proton conduction. The polypeptide is ATP synthase subunit delta (Edwardsiella ictaluri (strain 93-146)).